The following is a 117-amino-acid chain: S-adenosylmethionine decarboxylase proenzyme (117 aa).

Ser63 functions as the Schiff-base intermediate with substrate; via pyruvic acid in the catalytic mechanism. Ser63 bears the Pyruvic acid (Ser); by autocatalysis mark. The active-site Proton acceptor; for processing activity is the His68. The active-site Proton donor; for catalytic activity is the Cys83.

This sequence belongs to the prokaryotic AdoMetDC family. Type 1 subfamily. In terms of assembly, heterotetramer of two alpha and two beta chains arranged as a dimer of alpha/beta heterodimers. Requires pyruvate as cofactor. Is synthesized initially as an inactive proenzyme. Formation of the active enzyme involves a self-maturation process in which the active site pyruvoyl group is generated from an internal serine residue via an autocatalytic post-translational modification. Two non-identical subunits are generated from the proenzyme in this reaction, and the pyruvate is formed at the N-terminus of the alpha chain, which is derived from the carboxyl end of the proenzyme. The post-translation cleavage follows an unusual pathway, termed non-hydrolytic serinolysis, in which the side chain hydroxyl group of the serine supplies its oxygen atom to form the C-terminus of the beta chain, while the remainder of the serine residue undergoes an oxidative deamination to produce ammonia and the pyruvoyl group blocking the N-terminus of the alpha chain.

The catalysed reaction is S-adenosyl-L-methionine + H(+) = S-adenosyl 3-(methylsulfanyl)propylamine + CO2. It participates in amine and polyamine biosynthesis; S-adenosylmethioninamine biosynthesis; S-adenosylmethioninamine from S-adenosyl-L-methionine: step 1/1. Catalyzes the decarboxylation of S-adenosylmethionine to S-adenosylmethioninamine (dcAdoMet), the propylamine donor required for the synthesis of the polyamines spermine and spermidine from the diamine putrescine. The sequence is that of S-adenosylmethionine decarboxylase proenzyme from Methanococcus aeolicus (strain ATCC BAA-1280 / DSM 17508 / OCM 812 / Nankai-3).